The following is a 208-amino-acid chain: Na(+)-translocating NADH-quinone reductase subunit D (208 aa).

Helical transmembrane passes span isoleucine 42–isoleucine 62, valine 70–leucine 90, valine 103–methionine 123, phenylalanine 131–isoleucine 151, and asparagine 178–isoleucine 198.

It belongs to the NqrDE/RnfAE family. As to quaternary structure, composed of six subunits; NqrA, NqrB, NqrC, NqrD, NqrE and NqrF.

It localises to the cell inner membrane. The enzyme catalyses a ubiquinone + n Na(+)(in) + NADH + H(+) = a ubiquinol + n Na(+)(out) + NAD(+). Functionally, NQR complex catalyzes the reduction of ubiquinone-1 to ubiquinol by two successive reactions, coupled with the transport of Na(+) ions from the cytoplasm to the periplasm. NqrA to NqrE are probably involved in the second step, the conversion of ubisemiquinone to ubiquinol. This chain is Na(+)-translocating NADH-quinone reductase subunit D, found in Pasteurella multocida (strain Pm70).